A 574-amino-acid chain; its full sequence is Serine/arginine repetitive matrix protein 4 (574 aa).

Disordered regions lie at residues 45-217 (LETP…HGGD), 257-291 (IVQNSESSDGKRRADYDSGNDTSSPPSSKTGITRS), 366-422 (DLIS…SYSL), 454-508 (YCSS…VSSR), and 526-574 (RSRS…RARR). Residues 51–72 (PKDDEEKVKAKDLVTKTHEKNG) show a composition bias toward basic and acidic residues. Basic residues-rich tracts occupy residues 73 to 88 (HIKRRGRKRHSHRRAR), 102 to 120 (PKTKKKKKKSQRKRRRHRS), and 128 to 184 (VRKK…HRKA). Over residues 194 to 217 (NRSEDCEKSGFRDGGRSSDVHGGD) the composition is skewed to basic and acidic residues. Over residues 275–289 (GNDTSSPPSSKTGIT) the composition is skewed to polar residues. Over residues 366–385 (DLISDRNRSPSHDRYEDGTR) the composition is skewed to basic and acidic residues. The segment covering 405–422 (RSLSSGRRSYSRSSSYSL) has biased composition (low complexity). A compositionally biased stretch (basic residues) spans 454–477 (YCSSCKSRKHSRRRPSSPMRKRRR). Over residues 478–487 (DSPSHLEARR) the composition is skewed to basic and acidic residues. The segment covering 496–508 (IPYYRPSPSVSSR) has biased composition (low complexity). Basic residues predominate over residues 526-539 (RSRSCSRSRSRSHS). Residues 540 to 559 (HTYSSYRSYSRSSSWNSLYS) show a composition bias toward low complexity. Basic residues predominate over residues 560-574 (RRSRSRSRSYSRARR).

Belongs to the nSR100 family.

The protein localises to the nucleus. In terms of biological role, splicing factor specifically required for neural cell differentiation. Acts in conjunction with nPTB/PTBP2 by binding directly to its regulated target transcripts and promotes neural-specific exon inclusion in many genes that function in neural cell differentiation. Required to promote the inclusion of neural-specific exon 10 in nPTB/PTBP2, leading to increased expression of neural-specific nPTB/PTBP2. This chain is Serine/arginine repetitive matrix protein 4 (srrm4), found in Danio rerio (Zebrafish).